Reading from the N-terminus, the 277-residue chain is Thiamine thiazole synthase (277 aa).

NAD(+) is bound by residues serine 36, glycine 63, valine 126, and 152–154 (HVD). 2 residues coordinate Fe cation: aspartate 154 and histidine 169. Methionine 230 provides a ligand contact to NAD(+). Arginine 240 provides a ligand contact to glycine.

Belongs to the THI4 family. In terms of assembly, homooctamer; tetramer of dimers. Fe(2+) is required as a cofactor.

It catalyses the reaction hydrogen sulfide + glycine + NAD(+) = ADP-5-ethyl-4-methylthiazole-2-carboxylate + nicotinamide + 3 H2O + H(+). Its pathway is cofactor biosynthesis; thiamine diphosphate biosynthesis. Involved in the biosynthesis of the thiazole moiety of thiamine. Catalyzes the conversion of NAD and glycine to adenosine diphosphate 5-(2-hydroxyethyl)-4-methylthiazole-2-carboxylate (ADT), an adenylated thiazole intermediate, using free sulfide as a source of sulfur. This is Thiamine thiazole synthase from Fervidobacterium nodosum (strain ATCC 35602 / DSM 5306 / Rt17-B1).